Consider the following 750-residue polypeptide: Photosystem I P700 chlorophyll a apoprotein A1 (750 aa).

8 helical membrane passes run V70 to A93, L156 to H179, L195 to L219, I291 to Y309, W346 to Y369, L385 to V411, A433 to H455, and F531 to L549. [4Fe-4S] cluster-binding residues include C573 and C582. The next 2 membrane-spanning stretches (helical) occupy residues H589–W610 and L664–F686. H675 serves as a coordination point for chlorophyll a'. Residues M683 and Y691 each contribute to the chlorophyll a site. Position 692 (W692) interacts with phylloquinone. The chain crosses the membrane as a helical span at residues A724 to A744.

Belongs to the PsaA/PsaB family. In terms of assembly, the PsaA/B heterodimer binds the P700 chlorophyll special pair and subsequent electron acceptors. PSI consists of a core antenna complex that captures photons, and an electron transfer chain that converts photonic excitation into a charge separation. The eukaryotic PSI reaction center is composed of at least 11 subunits. It depends on P700 is a chlorophyll a/chlorophyll a' dimer, A0 is one or more chlorophyll a, A1 is one or both phylloquinones and FX is a shared 4Fe-4S iron-sulfur center. as a cofactor.

Its subcellular location is the plastid. The protein resides in the chloroplast thylakoid membrane. It catalyses the reaction reduced [plastocyanin] + hnu + oxidized [2Fe-2S]-[ferredoxin] = oxidized [plastocyanin] + reduced [2Fe-2S]-[ferredoxin]. Its function is as follows. PsaA and PsaB bind P700, the primary electron donor of photosystem I (PSI), as well as the electron acceptors A0, A1 and FX. PSI is a plastocyanin-ferredoxin oxidoreductase, converting photonic excitation into a charge separation, which transfers an electron from the donor P700 chlorophyll pair to the spectroscopically characterized acceptors A0, A1, FX, FA and FB in turn. Oxidized P700 is reduced on the lumenal side of the thylakoid membrane by plastocyanin. This is Photosystem I P700 chlorophyll a apoprotein A1 from Solanum bulbocastanum (Wild potato).